We begin with the raw amino-acid sequence, 423 residues long: Glucose-6-phosphate isomerase (423 aa).

The Proton donor role is filled by Glu-279. Residues His-300 and Lys-413 contribute to the active site.

This sequence belongs to the GPI family.

The protein resides in the cytoplasm. The enzyme catalyses alpha-D-glucose 6-phosphate = beta-D-fructose 6-phosphate. It functions in the pathway carbohydrate biosynthesis; gluconeogenesis. It participates in carbohydrate degradation; glycolysis; D-glyceraldehyde 3-phosphate and glycerone phosphate from D-glucose: step 2/4. Catalyzes the reversible isomerization of glucose-6-phosphate to fructose-6-phosphate. This is Glucose-6-phosphate isomerase from Acholeplasma laidlawii (strain PG-8A).